Consider the following 122-residue polypeptide: Piercer of microtubule wall 2 protein (122 aa).

Residues 1–23 (MARETDCDLDKKTSLTSDAEMRP) show a composition bias toward basic and acidic residues. Disordered regions lie at residues 1–26 (MARE…PEPP) and 99–122 (QNNS…QHTL). Residues 113–122 (IDSPNYQHTL) are compositionally biased toward polar residues.

This sequence belongs to the PIERCE2 family. In terms of assembly, microtubule inner protein component of sperm flagellar doublet microtubules. Interacts with CFAP53, ODAD1 and ODAD3; the interactions link the outer dynein arms docking complex (ODA-DC) to the internal microtubule inner proteins (MIP) in cilium axoneme.

The protein localises to the cytoplasm. It is found in the cytoskeleton. It localises to the cilium axoneme. Its subcellular location is the flagellum axoneme. Its function is as follows. Microtubule inner protein involved in the attachment of outer dynein arms (ODAs) to dynein-decorated doublet microtubules (DMTs) in cilia axoneme, which is required for motile cilia beating. The protein is Piercer of microtubule wall 2 protein of Mus musculus (Mouse).